A 432-amino-acid chain; its full sequence is Luc7-like protein 3 (432 aa).

Methionine 1 carries the post-translational modification N-acetylmethionine. Phosphoserine occurs at positions 3, 110, and 115. Residues 124-181 (KNEEKIQVLTDKIDVLLQQIEELGSEGKVEEAQGMMKLVEQLKEERELLRSTTSTIES) are a coiled coil. Lysine 231 carries the post-translational modification N6-acetyllysine. The span at 234-287 (LRKRTEEPDRDERLKKEKQEREEREKEREREREERERKRRREEEEREKERARDR) shows a compositional bias: basic and acidic residues. The tract at residues 234 to 432 (LRKRTEEPDR…IKSEGDTQSN (199 aa)) is disordered. Residues 288–301 (ERRKRSRSRSRHSS) show a composition bias toward basic residues. Residues 302–311 (RTSDRRCSRS) are compositionally biased toward basic and acidic residues. A compositionally biased stretch (basic residues) spans 312 to 367 (RDHKRSRSRERRRSRSRDRRRSRSHDRSERKHRSRSRDRRRSKSRDRKSYKHRSKS). Basic and acidic residues predominate over residues 368-414 (RDREQDRKSKEKEKRGSDDKKSSVKSGSREKQSEDTNTESKESDTKN). The residue at position 420 (serine 420) is a Phosphoserine. Residues 421 to 432 (EDIKSEGDTQSN) show a composition bias toward basic and acidic residues. Residue lysine 424 forms a Glycyl lysine isopeptide (Lys-Gly) (interchain with G-Cter in SUMO1); alternate linkage. Lysine 424 is covalently cross-linked (Glycyl lysine isopeptide (Lys-Gly) (interchain with G-Cter in SUMO2); alternate). Residues serine 425 and serine 431 each carry the phosphoserine modification.

It belongs to the Luc7 family. May interact with SFRS1 and form homodimers. Interacts with JMJD6. Interacts with RBM25. Interacts with RSRC1 (via Arg/Ser-rich domain). Interacts with RRP1B. In terms of processing, phosphorylated in vitro by SRPK1, SRPK2 and CLK1. As to expression, widely expressed. Highest levels in heart, brain, pancreas, thymus, ovary, small intestine and peripheral blood leukocytes, as well as cerebellum, putamen and pituitary gland. Lowest levels in lung, liver and kidney. Also expressed in fetal tissues, including brain, heart, kidney, thymus and lung.

The protein resides in the nucleus speckle. Functionally, binds cAMP regulatory element DNA sequence. May play a role in RNA splicing. The polypeptide is Luc7-like protein 3 (LUC7L3) (Homo sapiens (Human)).